Consider the following 20-residue polypeptide: Antifungal protein (20 aa).

It belongs to the protease inhibitor I3 (leguminous Kunitz-type inhibitor) family.

Its function is as follows. Inhibits soybean trypsin. Has antifungal activity against R.cerealis, A.brassicae and A.niger, and weak antifungal activity against F.oxysporum. The chain is Antifungal protein from Cullen corylifolium (Malaysian scurfpea).